The sequence spans 488 residues: Bifunctional protein HldE (488 aa).

The segment at 1–330 is ribokinase; it reads MIDFDGLSNA…RNILPPASLA (330 aa). An ATP-binding site is contributed by 205–208; it reads NSKE. Residue aspartate 275 is part of the active site. A cytidylyltransferase region spans residues 358–488; the sequence is FTNGCFDILH…TSLVKRAGGA (131 aa).

It in the N-terminal section; belongs to the carbohydrate kinase PfkB family. This sequence in the C-terminal section; belongs to the cytidylyltransferase family. As to quaternary structure, homodimer.

It catalyses the reaction D-glycero-beta-D-manno-heptose 7-phosphate + ATP = D-glycero-beta-D-manno-heptose 1,7-bisphosphate + ADP + H(+). The enzyme catalyses D-glycero-beta-D-manno-heptose 1-phosphate + ATP + H(+) = ADP-D-glycero-beta-D-manno-heptose + diphosphate. Its pathway is nucleotide-sugar biosynthesis; ADP-L-glycero-beta-D-manno-heptose biosynthesis; ADP-L-glycero-beta-D-manno-heptose from D-glycero-beta-D-manno-heptose 7-phosphate: step 1/4. It functions in the pathway nucleotide-sugar biosynthesis; ADP-L-glycero-beta-D-manno-heptose biosynthesis; ADP-L-glycero-beta-D-manno-heptose from D-glycero-beta-D-manno-heptose 7-phosphate: step 3/4. In terms of biological role, catalyzes the phosphorylation of D-glycero-D-manno-heptose 7-phosphate at the C-1 position to selectively form D-glycero-beta-D-manno-heptose-1,7-bisphosphate. Functionally, catalyzes the ADP transfer from ATP to D-glycero-beta-D-manno-heptose 1-phosphate, yielding ADP-D-glycero-beta-D-manno-heptose. This is Bifunctional protein HldE from Nitrobacter winogradskyi (strain ATCC 25391 / DSM 10237 / CIP 104748 / NCIMB 11846 / Nb-255).